The following is a 256-amino-acid chain: Thiazole synthase (256 aa).

Residue Lys96 is the Schiff-base intermediate with DXP of the active site. Residues Gly157, 184–185 (AG), and 206–207 (NT) each bind 1-deoxy-D-xylulose 5-phosphate.

Belongs to the ThiG family. As to quaternary structure, homotetramer. Forms heterodimers with either ThiH or ThiS.

Its subcellular location is the cytoplasm. The enzyme catalyses [ThiS sulfur-carrier protein]-C-terminal-Gly-aminoethanethioate + 2-iminoacetate + 1-deoxy-D-xylulose 5-phosphate = [ThiS sulfur-carrier protein]-C-terminal Gly-Gly + 2-[(2R,5Z)-2-carboxy-4-methylthiazol-5(2H)-ylidene]ethyl phosphate + 2 H2O + H(+). It participates in cofactor biosynthesis; thiamine diphosphate biosynthesis. Functionally, catalyzes the rearrangement of 1-deoxy-D-xylulose 5-phosphate (DXP) to produce the thiazole phosphate moiety of thiamine. Sulfur is provided by the thiocarboxylate moiety of the carrier protein ThiS. In vitro, sulfur can be provided by H(2)S. This chain is Thiazole synthase, found in Brucella suis (strain ATCC 23445 / NCTC 10510).